Here is a 113-residue protein sequence, read N- to C-terminus: Large ribosomal subunit protein uL24 (113 aa).

This sequence belongs to the universal ribosomal protein uL24 family. In terms of assembly, part of the 50S ribosomal subunit.

Functionally, one of two assembly initiator proteins, it binds directly to the 5'-end of the 23S rRNA, where it nucleates assembly of the 50S subunit. In terms of biological role, one of the proteins that surrounds the polypeptide exit tunnel on the outside of the subunit. The sequence is that of Large ribosomal subunit protein uL24 from Micrococcus luteus (Micrococcus lysodeikticus).